The following is a 179-amino-acid chain: Embryo-specific protein ATS3A (179 aa).

The signal sequence occupies residues 1 to 22 (MLRLAIPLFLFALCSFTLFSSA). One can recognise a PLAT domain in the interval 48 to 158 (CSYTVIIKTS…NSVWYGFNVC (111 aa)).

In terms of assembly, interacts with EULS3 (via N-terminus). In terms of tissue distribution, expressed in roots, rosette leaves, stems, cauline leaves and flowers.

It localises to the secreted. Its function is as follows. May play a role during embryo development. The protein is Embryo-specific protein ATS3A of Arabidopsis thaliana (Mouse-ear cress).